We begin with the raw amino-acid sequence, 433 residues long: Trigger factor (433 aa).

Residues 163 to 248 (GDTVNIDFSG…VNEIKFKEVP (86 aa)) form the PPIase FKBP-type domain.

The protein belongs to the FKBP-type PPIase family. Tig subfamily.

The protein localises to the cytoplasm. The enzyme catalyses [protein]-peptidylproline (omega=180) = [protein]-peptidylproline (omega=0). In terms of biological role, involved in protein export. Acts as a chaperone by maintaining the newly synthesized protein in an open conformation. Functions as a peptidyl-prolyl cis-trans isomerase. The sequence is that of Trigger factor from Staphylococcus aureus (strain bovine RF122 / ET3-1).